A 130-amino-acid polypeptide reads, in one-letter code: YopE regulator (130 aa).

In terms of biological role, positive regulator of YopE. This Yersinia pestis protein is YopE regulator (yerA).